A 154-amino-acid chain; its full sequence is Urease accessory protein UreE (154 aa).

Residues 135–154 (YGHGRTFGHDHGHAHDHHHA) are disordered.

Belongs to the UreE family.

Its subcellular location is the cytoplasm. Its function is as follows. Involved in urease metallocenter assembly. Binds nickel. Probably functions as a nickel donor during metallocenter assembly. This chain is Urease accessory protein UreE, found in Paracoccus denitrificans (strain Pd 1222).